Here is a 224-residue protein sequence, read N- to C-terminus: Flagellar L-ring protein (224 aa).

Positions 1–15 (MARYLVLAVALLLAA) are cleaved as a signal peptide. Cys16 carries N-palmitoyl cysteine lipidation. Cys16 carries the S-diacylglycerol cysteine lipid modification.

This sequence belongs to the FlgH family. As to quaternary structure, the basal body constitutes a major portion of the flagellar organelle and consists of four rings (L,P,S, and M) mounted on a central rod.

Its subcellular location is the cell outer membrane. The protein resides in the bacterial flagellum basal body. Assembles around the rod to form the L-ring and probably protects the motor/basal body from shearing forces during rotation. This chain is Flagellar L-ring protein, found in Shewanella baltica (strain OS223).